The chain runs to 533 residues: Capsid protein VP1 (533 aa).

The tract at residues 333 to 353 is disordered; the sequence is TIDLQQNPVPQTSSSTTDSPQ.

It belongs to the microviridae F protein family.

Its subcellular location is the virion. It localises to the host cytoplasm. Its function is as follows. Assembles to form an icosahedral capsid with a T=1 symmetry. In Bdellovibrio bacteriovorus (Bacteriophage phiMH2K), this protein is Capsid protein VP1.